The primary structure comprises 197 residues: Ribonuclease HII (197 aa).

The 190-residue stretch at 3–192 folds into the RNase H type-2 domain; that stretch reads QLIAGVDEVG…VQLSLMQRGG (190 aa). A divalent metal cation contacts are provided by aspartate 9, glutamate 10, and aspartate 101.

It belongs to the RNase HII family. Mn(2+) is required as a cofactor. Mg(2+) serves as cofactor.

The protein localises to the cytoplasm. It carries out the reaction Endonucleolytic cleavage to 5'-phosphomonoester.. In terms of biological role, endonuclease that specifically degrades the RNA of RNA-DNA hybrids. In Pseudoalteromonas atlantica (strain T6c / ATCC BAA-1087), this protein is Ribonuclease HII.